Here is a 201-residue protein sequence, read N- to C-terminus: dITP/XTP pyrophosphatase (201 aa).

7–12 (TNNKGK) contributes to the substrate binding site. Positions 40 and 69 each coordinate Mg(2+). Asp69 serves as the catalytic Proton acceptor. Substrate-binding positions include Ser70, 152 to 155 (FGYD), Lys175, and 180 to 181 (HR).

The protein belongs to the HAM1 NTPase family. As to quaternary structure, homodimer. The cofactor is Mg(2+).

It carries out the reaction XTP + H2O = XMP + diphosphate + H(+). The catalysed reaction is dITP + H2O = dIMP + diphosphate + H(+). It catalyses the reaction ITP + H2O = IMP + diphosphate + H(+). Its function is as follows. Pyrophosphatase that catalyzes the hydrolysis of nucleoside triphosphates to their monophosphate derivatives, with a high preference for the non-canonical purine nucleotides XTP (xanthosine triphosphate), dITP (deoxyinosine triphosphate) and ITP. Seems to function as a house-cleaning enzyme that removes non-canonical purine nucleotides from the nucleotide pool, thus preventing their incorporation into DNA/RNA and avoiding chromosomal lesions. The protein is dITP/XTP pyrophosphatase of Desulforamulus reducens (strain ATCC BAA-1160 / DSM 100696 / MI-1) (Desulfotomaculum reducens).